An 83-amino-acid polypeptide reads, in one-letter code: MKASMFLALAGLVLLFVVGYASESEEKEFPIELLSKIFAVDVFKGEGRGCKGFGDSCTPGKNECCPNHACSNKHKWCKVYLGK.

The N-terminal stretch at 1–21 is a signal peptide; it reads MKASMFLALAGLVLLFVVGYA. The propeptide occupies 22–48; sequence SESEEKEFPIELLSKIFAVDVFKGEGR. 3 disulfide bridges follow: cysteine 50–cysteine 65, cysteine 57–cysteine 70, and cysteine 64–cysteine 77. Leucine amide is present on leucine 81.

The protein belongs to the neurotoxin 10 (Hwtx-1) family. 15 (Hntx-3) subfamily. In terms of assembly, monomer. Expressed by the venom gland.

It is found in the secreted. Lethal neurotoxin. Selectively blocks tetrodotoxin-sensitive voltage-gated sodium channels (Nav). Does not affect tetrodotoxin-resistant voltage-gated sodium channels or calcium channels. This is Mu-theraphotoxin-Hhn2j 4 from Cyriopagopus hainanus (Chinese bird spider).